Here is a 221-residue protein sequence, read N- to C-terminus: Crossover junction endodeoxyribonuclease RuvC (221 aa).

Active-site residues include D12, E73, and D146. Positions 12, 73, and 146 each coordinate Mg(2+). Residues 169-221 form a disordered region; sequence SQYSEQELEKRRRVQQGKLGKAKSTYNAEQAQSHASDPAKAAHPSQFQRTDTN. A compositionally biased stretch (polar residues) spans 192–203; it reads STYNAEQAQSHA.

The protein belongs to the RuvC family. In terms of assembly, homodimer which binds Holliday junction (HJ) DNA. The HJ becomes 2-fold symmetrical on binding to RuvC with unstacked arms; it has a different conformation from HJ DNA in complex with RuvA. In the full resolvosome a probable DNA-RuvA(4)-RuvB(12)-RuvC(2) complex forms which resolves the HJ. The cofactor is Mg(2+).

Its subcellular location is the cytoplasm. The catalysed reaction is Endonucleolytic cleavage at a junction such as a reciprocal single-stranded crossover between two homologous DNA duplexes (Holliday junction).. The RuvA-RuvB-RuvC complex processes Holliday junction (HJ) DNA during genetic recombination and DNA repair. Endonuclease that resolves HJ intermediates. Cleaves cruciform DNA by making single-stranded nicks across the HJ at symmetrical positions within the homologous arms, yielding a 5'-phosphate and a 3'-hydroxyl group; requires a central core of homology in the junction. The consensus cleavage sequence is 5'-(A/T)TT(C/G)-3'. Cleavage occurs on the 3'-side of the TT dinucleotide at the point of strand exchange. HJ branch migration catalyzed by RuvA-RuvB allows RuvC to scan DNA until it finds its consensus sequence, where it cleaves and resolves the cruciform DNA. This is Crossover junction endodeoxyribonuclease RuvC from Corynebacterium glutamicum (strain ATCC 13032 / DSM 20300 / JCM 1318 / BCRC 11384 / CCUG 27702 / LMG 3730 / NBRC 12168 / NCIMB 10025 / NRRL B-2784 / 534).